A 543-amino-acid polypeptide reads, in one-letter code: Nucleoside-triphosphatase ntp-1 (543 aa).

The helical transmembrane segment at valine 40–serine 60 threads the bilayer. Glutamate 212 (proton acceptor) is an active-site residue. The chain crosses the membrane as a helical span at residues glutamine 497 to tyrosine 517.

It belongs to the GDA1/CD39 NTPase family.

The protein resides in the golgi apparatus membrane. The catalysed reaction is a ribonucleoside 5'-triphosphate + H2O = a ribonucleoside 5'-diphosphate + phosphate + H(+). Functionally, seems to be able to hydrolyze CTP, ATP and UTP. The polypeptide is Nucleoside-triphosphatase ntp-1 (Caenorhabditis elegans).